A 300-amino-acid chain; its full sequence is MLSEGYLSGLAYRNDIQWSYPSSNEQVAEEKEEEMEATAAASLSYSSVDETQVQNLYVSCKSSGKVISSVYSRESQHSRNPRITVLQTNPNPVYESPNLAAVELYRDTSRETYLVPPSCKSICKNYNDLQIAGGQVMAINSATTDFPSEGSFQYGPLLKSSEIPLSMEDSMFTQPSDLPPTPIQRYSSYWRITSIKEKNSLQMQKPISNAVLNEYLEQKLVELYKQYFMDTGFHDSSPTQILASELIMTNVDQISIQVSIEKNLEISKARDIVINRLLQYGSTEISTQSLHISQYSNVNP.

A pLxIS motif motif is present at residues 289–293 (SLHIS). A Phosphoserine modification is found at Ser-293.

Interacts (via pLxIS motif) with IRF5; leading to IRF5 activation. Interacts with SLC15A4; leading to its recruitment to endolysosome. Post-translationally, the phosphorylated pLxIS motif constitutes an IRF5-binding motif, leading to recruitment of the transcription factor IRF5 to induce type-I interferons and other cytokines.

Its subcellular location is the lysosome membrane. The protein resides in the endosome membrane. It is found in the nucleus. It localises to the cytoplasm. Functionally, innate immune adapter that mediates the recruitment and activation of IRF5 downstream of endolysosomal toll-like receptors TLR7, TLR8 and TLR9. Following recruitment to endolysosome by SLC15A4 downstream of TLR7, TLR8 and TLR9, specifically recruits IRF5 transcription factor via its pLxIS motif, leading to IRF5 activation and subsequent expression of type I interferons. Plays a role in the regulation of endolysosomal pH in immune cells such as B-cells, dendritic cells and monocytes. This Bos taurus (Bovine) protein is TLR adapter interacting with SLC15A4 on the lysosome.